Reading from the N-terminus, the 204-residue chain is Thymidylate kinase (204 aa).

An ATP-binding site is contributed by Gly-7–Thr-14.

Belongs to the thymidylate kinase family.

It carries out the reaction dTMP + ATP = dTDP + ADP. In terms of biological role, phosphorylation of dTMP to form dTDP in both de novo and salvage pathways of dTTP synthesis. The sequence is that of Thymidylate kinase from Synechococcus sp. (strain JA-3-3Ab) (Cyanobacteria bacterium Yellowstone A-Prime).